The primary structure comprises 215 residues: Octanoyltransferase (215 aa).

One can recognise a BPL/LPL catalytic domain in the interval 31-206 (PDSQDEIWLV…QLVKHLDYAE (176 aa)). Residues 70–77 (RGGQVTYH), 137–139 (SLG), and 150–152 (GLA) contribute to the substrate site. The active-site Acyl-thioester intermediate is the Cys168.

Belongs to the LipB family.

The protein resides in the cytoplasm. It catalyses the reaction octanoyl-[ACP] + L-lysyl-[protein] = N(6)-octanoyl-L-lysyl-[protein] + holo-[ACP] + H(+). It participates in protein modification; protein lipoylation via endogenous pathway; protein N(6)-(lipoyl)lysine from octanoyl-[acyl-carrier-protein]: step 1/2. Functionally, catalyzes the transfer of endogenously produced octanoic acid from octanoyl-acyl-carrier-protein onto the lipoyl domains of lipoate-dependent enzymes. Lipoyl-ACP can also act as a substrate although octanoyl-ACP is likely to be the physiological substrate. The sequence is that of Octanoyltransferase from Pseudomonas putida (strain ATCC 700007 / DSM 6899 / JCM 31910 / BCRC 17059 / LMG 24140 / F1).